Reading from the N-terminus, the 307-residue chain is Peroxisomal membrane protein PMP34 (307 aa).

Residues 1 to 9 (MASVLSYES) are Cytoplasmic-facing. The necessary for targeting to peroxisomes and interaction with PEX19 stretch occupies residues 1–147 (MASVLSYESL…NEDIIPTNYK (147 aa)). 3 Solcar repeats span residues 7 to 92 (YESL…LKAV), 99 to 192 (SSTG…LKRQ), and 200 to 294 (LSSL…LTAA). The helical transmembrane segment at 10–30 (LVHAVAGAVGSVTAMTVFFPL) threads the bilayer. At 31-66 (DTARLRLQVDEKRKSKTTHAVLLEIIKEEGLLAPYR) the chain is on the lumenal side. Residues 67–87 (GWFPVISSLCCSNFVYFYTFN) traverse the membrane as a helical segment. Residues 88 to 104 (SLKAVWVKGQRSSTGKD) lie on the Cytoplasmic side of the membrane. A helical membrane pass occupies residues 105-125 (LVVGFVAGVVNVLLTTPLWVV). Topologically, residues 126-160 (NTRLKLQGAKFRNEDIIPTNYKGIIDAFHQIIRDE) are lumenal. Residues 161 to 181 (GILALWNGTFPSLLLVFNPAI) traverse the membrane as a helical segment. Residues 182–202 (QFMFYEGLKRQLLKKRMKLSS) lie on the Cytoplasmic side of the membrane. Positions 190 to 199 (KRQLLKKRMK) match the Peroxisome localization signal motif. Residues 203–223 (LDVFIIGAIAKAIATTVTYPM) traverse the membrane as a helical segment. Residues 224–280 (QTVQSILRFGRHRLNPENRTLGSLRNVLSLLHQRVKRFGIMGLYKGLEAKLLQTVLT) lie on the Lumenal side of the membrane. Residues 244–307 (LGSLRNVLSL…VMGLKSTHKH (64 aa)) form a necessary for targeting to peroxisomes and interaction with PEX19 region. The chain crosses the membrane as a helical span at residues 281 to 301 (AALMFLVYEKLTAATFTVMGL). Residues 302–307 (KSTHKH) are Cytoplasmic-facing.

It belongs to the mitochondrial carrier (TC 2.A.29) family. As to quaternary structure, interacts (via N- and C-terminus peroxisomal targeting regions) with PEX19; the interaction occurs with the newly synthesized SLC25A17 in the cytosol. In terms of tissue distribution, expressed in liver, kidney, heart, spleen, muscle and lung.

The protein localises to the cytoplasm. It localises to the peroxisome membrane. The enzyme catalyses AMP(out) + CoA(in) = AMP(in) + CoA(out). The catalysed reaction is 3'-dephospho-CoA(in) + AMP(out) = 3'-dephospho-CoA(out) + AMP(in). It catalyses the reaction acetyl-CoA(in) + AMP(out) = acetyl-CoA(out) + AMP(in). It carries out the reaction AMP(in) + NAD(+)(out) = AMP(out) + NAD(+)(in). The enzyme catalyses FAD(in) + AMP(out) = FAD(out) + AMP(in). The catalysed reaction is FMN(in) + AMP(out) = FMN(out) + AMP(in). It catalyses the reaction AMP(in) + ADP(out) = AMP(out) + ADP(in). It carries out the reaction adenosine 3',5'-bisphosphate(in) + AMP(out) = adenosine 3',5'-bisphosphate(out) + AMP(in). The enzyme catalyses FAD(in) + CoA(out) = FAD(out) + CoA(in). The catalysed reaction is FAD(in) + adenosine 3',5'-bisphosphate(out) = FAD(out) + adenosine 3',5'-bisphosphate(in). It catalyses the reaction FMN(in) + CoA(out) = FMN(out) + CoA(in). It carries out the reaction FMN(in) + adenosine 3',5'-bisphosphate(out) = FMN(out) + adenosine 3',5'-bisphosphate(in). The enzyme catalyses FAD(out) + NAD(+)(in) = FAD(in) + NAD(+)(out). The catalysed reaction is FMN(out) + NAD(+)(in) = FMN(in) + NAD(+)(out). It catalyses the reaction NAD(+)(in) + CoA(out) = NAD(+)(out) + CoA(in). It carries out the reaction adenosine 3',5'-bisphosphate(out) + NAD(+)(in) = adenosine 3',5'-bisphosphate(in) + NAD(+)(out). The enzyme catalyses FMN(out) + ADP(in) = FMN(in) + ADP(out). The catalysed reaction is FAD(out) + ADP(in) = FAD(in) + ADP(out). It catalyses the reaction ADP(out) + CoA(in) = ADP(in) + CoA(out). It carries out the reaction adenosine 3',5'-bisphosphate(in) + ADP(out) = adenosine 3',5'-bisphosphate(out) + ADP(in). Peroxisomal transporter for multiple cofactors like coenzyme A (CoA), flavin adenine dinucleotide (FAD), flavin mononucleotide (FMN) and nucleotide adenosine monophosphate (AMP), and to a lesser extent for nicotinamide adenine dinucleotide (NAD(+)), adenosine diphosphate (ADP) and adenosine 3',5'-diphosphate (PAP). May catalyze the transport of free CoA, FAD and NAD(+) from the cytosol into the peroxisomal matrix by a counter-exchange mechanism. This Mus musculus (Mouse) protein is Peroxisomal membrane protein PMP34 (Slc25a17).